The chain runs to 113 residues: Cell cycle protein GpsB (113 aa).

Positions 36-68 form a coiled coil; it reads LDMVIKDYSTFTQEIEALQAENIRLVQELDNAP.

It belongs to the GpsB family. Forms polymers through the coiled coil domains. Interacts with PBP1, MreC and EzrA.

It is found in the cytoplasm. Divisome component that associates with the complex late in its assembly, after the Z-ring is formed, and is dependent on DivIC and PBP2B for its recruitment to the divisome. Together with EzrA, is a key component of the system that regulates PBP1 localization during cell cycle progression. Its main role could be the removal of PBP1 from the cell pole after pole maturation is completed. Also contributes to the recruitment of PBP1 to the division complex. Not essential for septum formation. This chain is Cell cycle protein GpsB, found in Listeria monocytogenes serotype 4b (strain CLIP80459).